Consider the following 124-residue polypeptide: Cytochrome b5-like protein (124 aa).

Residues 5–22 traverse the membrane as a helical segment; that stretch reads YLLILIIIYVIKIICRYF. The 76-residue stretch at 49–124 folds into the Cytochrome b5 heme-binding domain; it reads NQINQVNQVN…ILSKYKITEK (76 aa). The heme site is built by histidine 84 and histidine 108.

This sequence belongs to the cytochrome b5 family.

The protein resides in the membrane. Membrane bound hemoprotein which function as an electron carrier for several membrane bound oxygenases. The protein is Cytochrome b5-like protein of Acanthamoeba polyphaga (Amoeba).